Here is a 317-residue protein sequence, read N- to C-terminus: Ribonuclease Z (317 aa).

Zn(2+) contacts are provided by His63, His65, Asp67, His68, His143, Asp214, and His272. Residue Asp67 is the Proton acceptor of the active site.

This sequence belongs to the RNase Z family. Homodimer. It depends on Zn(2+) as a cofactor.

The catalysed reaction is Endonucleolytic cleavage of RNA, removing extra 3' nucleotides from tRNA precursor, generating 3' termini of tRNAs. A 3'-hydroxy group is left at the tRNA terminus and a 5'-phosphoryl group is left at the trailer molecule.. Zinc phosphodiesterase, which displays some tRNA 3'-processing endonuclease activity. Probably involved in tRNA maturation, by removing a 3'-trailer from precursor tRNA. The sequence is that of Ribonuclease Z from Ligilactobacillus salivarius (strain UCC118) (Lactobacillus salivarius).